A 183-amino-acid chain; its full sequence is Akirin-1B (183 aa).

The interval 14–43 (EALMSPQSPKRRRCAPLPGSPATPSPQRCG) is disordered. Residues 180–183 (SYVS) carry the SYVS motif motif.

This sequence belongs to the akirin family.

Its subcellular location is the nucleus. Molecular adapter that acts as a bridge between proteins, and which is involved skeletal muscle development. Functions as a signal transducer for MSTN during skeletal muscle regeneration and myogenesis. The polypeptide is Akirin-1B (akirin1-b) (Xenopus laevis (African clawed frog)).